Here is a 267-residue protein sequence, read N- to C-terminus: Tryptophan synthase alpha chain (267 aa).

Catalysis depends on proton acceptor residues Glu-49 and Asp-60.

Belongs to the TrpA family. Tetramer of two alpha and two beta chains.

The catalysed reaction is (1S,2R)-1-C-(indol-3-yl)glycerol 3-phosphate + L-serine = D-glyceraldehyde 3-phosphate + L-tryptophan + H2O. It functions in the pathway amino-acid biosynthesis; L-tryptophan biosynthesis; L-tryptophan from chorismate: step 5/5. Its function is as follows. The alpha subunit is responsible for the aldol cleavage of indoleglycerol phosphate to indole and glyceraldehyde 3-phosphate. The chain is Tryptophan synthase alpha chain from Salinispora tropica (strain ATCC BAA-916 / DSM 44818 / JCM 13857 / NBRC 105044 / CNB-440).